The primary structure comprises 198 residues: Small ribosomal subunit protein uS4z (198 aa).

Phosphoserine is present on Ser-68. Residues 109-180 (RRLQTIVFKS…PGRVKRRNEK (72 aa)) enclose the S4 RNA-binding domain. Residues 163-198 (TSPFGGGRPGRVKRRNEKSASKKASGGGDADGDDEE) form a disordered region.

The protein belongs to the universal ribosomal protein uS4 family. As to quaternary structure, binds to the translation initiation factors TIF3E1.

This chain is Small ribosomal subunit protein uS4z (RPS9B), found in Arabidopsis thaliana (Mouse-ear cress).